A 409-amino-acid chain; its full sequence is 5-aminolevulinate synthase (409 aa).

R21, S137, and K156 together coordinate succinyl-CoA. Pyridoxal 5'-phosphate-binding residues include S189, H217, and T245. K248 is an active-site residue. Residue K248 is modified to N6-(pyridoxal phosphate)lysine. Pyridoxal 5'-phosphate contacts are provided by S277 and T278. A succinyl-CoA-binding site is contributed by T365.

This sequence belongs to the class-II pyridoxal-phosphate-dependent aminotransferase family. As to quaternary structure, homodimer. The cofactor is pyridoxal 5'-phosphate.

It catalyses the reaction succinyl-CoA + glycine + H(+) = 5-aminolevulinate + CO2 + CoA. Its pathway is porphyrin-containing compound metabolism; protoporphyrin-IX biosynthesis; 5-aminolevulinate from glycine: step 1/1. This Rhodobacter capsulatus (strain ATCC BAA-309 / NBRC 16581 / SB1003) protein is 5-aminolevulinate synthase (hemA).